Here is a 361-residue protein sequence, read N- to C-terminus: Chorismate synthase (361 aa).

Residue R47 coordinates NADP(+). Residues 124-126, G286, 301-305, and R327 each bind FMN; these read RAS and KPTAT.

This sequence belongs to the chorismate synthase family. Homotetramer. The cofactor is FMNH2.

The catalysed reaction is 5-O-(1-carboxyvinyl)-3-phosphoshikimate = chorismate + phosphate. It participates in metabolic intermediate biosynthesis; chorismate biosynthesis; chorismate from D-erythrose 4-phosphate and phosphoenolpyruvate: step 7/7. In terms of biological role, catalyzes the anti-1,4-elimination of the C-3 phosphate and the C-6 proR hydrogen from 5-enolpyruvylshikimate-3-phosphate (EPSP) to yield chorismate, which is the branch point compound that serves as the starting substrate for the three terminal pathways of aromatic amino acid biosynthesis. This reaction introduces a second double bond into the aromatic ring system. The protein is Chorismate synthase of Prochlorococcus marinus (strain NATL2A).